The chain runs to 132 residues: Small ribosomal subunit protein eS6 (132 aa).

This sequence belongs to the eukaryotic ribosomal protein eS6 family.

The sequence is that of Small ribosomal subunit protein eS6 from Methanosphaerula palustris (strain ATCC BAA-1556 / DSM 19958 / E1-9c).